The sequence spans 370 residues: Protein Wnt-1 (370 aa).

An N-terminal signal peptide occupies residues 1–19; that stretch reads MRVLALLLAVKAACVLLVS. The N-linked (GlcNAc...) asparagine glycan is linked to Asn-28. 5 cysteine pairs are disulfide-bonded: Cys-92–Cys-103, Cys-142–Cys-150, Cys-152–Cys-169, Cys-217–Cys-231, and Cys-219–Cys-226. Ser-223 carries O-palmitoleoyl serine; by PORCN lipidation. The disordered stretch occupies residues 261-282; that stretch reads GSNRASHRADPRHLEPENPAHK. Over residues 267–280 the composition is skewed to basic and acidic residues; sequence HRADPRHLEPENPA. 6 cysteine pairs are disulfide-bonded: Cys-299–Cys-330, Cys-315–Cys-325, Cys-329–Cys-369, Cys-345–Cys-360, Cys-347–Cys-357, and Cys-352–Cys-353. Asn-316 is a glycosylation site (N-linked (GlcNAc...) asparagine). The N-linked (GlcNAc...) asparagine glycan is linked to Asn-359.

Belongs to the Wnt family. Post-translationally, palmitoleoylation is required for efficient binding to frizzled receptors. Palmitoleoylation is necessary for proper trafficking to cell surface. Depalmitoleoylated by NOTUM, leading to inhibit Wnt signaling pathway.

It is found in the secreted. It localises to the extracellular space. The protein resides in the extracellular matrix. Its function is as follows. Ligand for members of the frizzled family of seven transmembrane receptors. Acts in the canonical Wnt signaling pathway by promoting beta-catenin-dependent transcriptional activation. Involved in neurogenesis. Performs a partially redundant function with wnt10b in the formation of the midbrain-hindbrain boundary (MHB) organizer. In the hindbrain, mediates lateral inhibition of boundary cell specification, probably via up-regulation of proneural and Delta gene expression in non-boundary cells; localized expression of wnt1 in boundary cells is maintained via rfng-mediated modulation of Notch activity. The protein is Protein Wnt-1 (wnt1) of Danio rerio (Zebrafish).